The primary structure comprises 1936 residues: Probable inactive serine/threonine-protein kinase DDB_G0278909 (1936 aa).

LRR repeat units lie at residues 61–82 (LLEKLNLSSNSLIEVTSLGHLN), 83–103 (KLKRLILNRNNLIEYSVQGLS), 104–125 (SLVYLGLCNNRIDRITDMSDCK), 126–147 (KLINIDLSGNRLTCGDGFDHFS), and 151–173 (SLKVLDLSSNSINCSLIDFQKKI). The LRRCT domain maps to 191 to 230 (NLIEKKYEEFRLFVINELPKLKYLNWVLISKDERTKASKL). Composition is skewed to low complexity over residues 253–285 (NNPNNTVTSAQSSPSLSSVSTPIPTPLNTSSNN) and 293–302 (TTTSVSVGSS). 2 disordered regions span residues 253 to 319 (NNPN…STSF) and 347 to 386 (KERENHQSTSPSSSSLSISSSSQNNNSNHHHHHPKSIDET). Over residues 310–319 (SSPNSRSTSF) the composition is skewed to polar residues. HEAT repeat units follow at residues 325–368 (SVGA…SSSS) and 439–476 (QETEDYIDILLNELQPNNTDFPTFASVIDQKVYLDLLY). A compositionally biased stretch (low complexity) spans 353–373 (QSTSPSSSSLSISSSSQNNNS). Low complexity predominate over residues 516 to 526 (LSSSSSSSSTT). 5 disordered regions span residues 516–544 (LSSSSSSSSTTPPQPQLPPPPPQQQQLDL), 599–620 (NSTLSTTPPLSSTTPPSPSPKL), 660–689 (IDQNTATTPSTPSKNLPKRLPSQSNLINNN), 702–756 (QSIL…PIMK), and 769–809 (QDQP…HFKS). Over residues 527-538 (PPQPQLPPPPPQ) the composition is skewed to pro residues. HEAT repeat units follow at residues 574 to 614 (PVVS…TTPP) and 617 to 654 (SPKLPTLEETIESVVTAKPSSTTTTATQTNKVSGGSAK). Low complexity predominate over residues 600–612 (STLSTTPPLSSTT). Residues 660–673 (IDQNTATTPSTPSK) are compositionally biased toward polar residues. Residues 736 to 756 (STTTNTTPTSTPGSPSKPIMK) show a composition bias toward low complexity. A compositionally biased stretch (pro residues) spans 774–785 (IVSPPQPQPQPP). Over residues 786 to 805 (IVQQKQQQQQQQQQQQQPQQ) the composition is skewed to low complexity. In terms of domain architecture, Protein kinase spans 961–1241 (IQVGSRLGLG…ISKILSQPFQ (281 aa)). ATP-binding positions include 967–975 (LGLGSFGDC) and lysine 988. 2 disordered regions span residues 1050–1075 (SHNNNNNNNNNNNNNNNNNNNNNNNN) and 1261–1308 (NTTI…VKHQ). Composition is skewed to low complexity over residues 1052–1075 (NNNNNNNNNNNNNNNNNNNNNNNN), 1266–1282 (SSSSSSGSGSSSVVGSV), and 1291–1302 (NNSNTGSTGSTS). HEAT repeat units lie at residues 1317–1356 (RKMILVLERIVSMLSTAAASASTSTISTDSIDSIKRALKA), 1512–1549 (FIEEGGVSSLLKMLLNSGNSLSMRALLALCCLISNQNC), 1553–1590 (LHNAGIIPKLMELLSSPQKLLRLHSLKVIETMSKDIEF), 1598–1635 (NCLSLLVNLLLNSYNGTNTGIGNNTTGNNNDSQESICS), 1690–1728 (QSRLKLVPTINQLVEILSNSTLKESIIISILKCLTLFSS), 1739–1775 (SMSVSIVSTLLIRNENNYEIKIHSLRFVSSLAKVNNK), 1780–1817 (IHMMGILQTLVNNLYDKNSMIKDEAISTISWLVSSQEC), 1821–1858 (FLQKNVLPMLFDFLSTRNVDIMERLIWAISFFALDDSA), and 1863–1900 (RDNQQCIQFIVNCLDRHEEVFKTLSIKTILILSQKQIN).

This is Probable inactive serine/threonine-protein kinase DDB_G0278909 from Dictyostelium discoideum (Social amoeba).